Here is a 181-residue protein sequence, read N- to C-terminus: Photosystem I assembly protein Ycf4 (181 aa).

The next 2 membrane-spanning stretches (helical) occupy residues 19–39 (YFWASLLLVGGLMFLLAGISS) and 61–81 (IVMMFYGTLSFGLSIYIMATL).

The protein belongs to the Ycf4 family.

It is found in the plastid. Its subcellular location is the chloroplast thylakoid membrane. Seems to be required for the assembly of the photosystem I complex. The polypeptide is Photosystem I assembly protein Ycf4 (Thalassiosira pseudonana (Marine diatom)).